We begin with the raw amino-acid sequence, 51 residues long: Insulin-2 (51 aa).

Intrachain disulfides connect Cys8–Cys37, Cys20–Cys50, and Cys36–Cys41.

It belongs to the insulin family. Heterodimer of a B chain and an A chain linked by two disulfide bonds.

The protein localises to the secreted. Functionally, insulin decreases blood glucose concentration. It increases cell permeability to monosaccharides, amino acids and fatty acids. It accelerates glycolysis, the pentose phosphate cycle, and glycogen synthesis in liver. This chain is Insulin-2, found in Katsuwonus pelamis (Skipjack tuna).